A 104-amino-acid polypeptide reads, in one-letter code: Large ribosomal subunit protein bL21 (104 aa).

The protein belongs to the bacterial ribosomal protein bL21 family. Part of the 50S ribosomal subunit. Contacts protein L20.

This protein binds to 23S rRNA in the presence of protein L20. This is Large ribosomal subunit protein bL21 from Symbiobacterium thermophilum (strain DSM 24528 / JCM 14929 / IAM 14863 / T).